The sequence spans 556 residues: 2-succinyl-5-enolpyruvyl-6-hydroxy-3-cyclohexene-1-carboxylate synthase (556 aa).

Belongs to the TPP enzyme family. MenD subfamily. Homodimer. The cofactor is Mg(2+). Mn(2+) is required as a cofactor. Requires thiamine diphosphate as cofactor.

It catalyses the reaction isochorismate + 2-oxoglutarate + H(+) = 5-enolpyruvoyl-6-hydroxy-2-succinyl-cyclohex-3-ene-1-carboxylate + CO2. Its pathway is quinol/quinone metabolism; 1,4-dihydroxy-2-naphthoate biosynthesis; 1,4-dihydroxy-2-naphthoate from chorismate: step 2/7. It functions in the pathway quinol/quinone metabolism; menaquinone biosynthesis. In terms of biological role, catalyzes the thiamine diphosphate-dependent decarboxylation of 2-oxoglutarate and the subsequent addition of the resulting succinic semialdehyde-thiamine pyrophosphate anion to isochorismate to yield 2-succinyl-5-enolpyruvyl-6-hydroxy-3-cyclohexene-1-carboxylate (SEPHCHC). In Escherichia coli O7:K1 (strain IAI39 / ExPEC), this protein is 2-succinyl-5-enolpyruvyl-6-hydroxy-3-cyclohexene-1-carboxylate synthase.